The primary structure comprises 79 residues: Large ribosomal subunit protein bL28 (79 aa).

This sequence belongs to the bacterial ribosomal protein bL28 family.

This chain is Large ribosomal subunit protein bL28, found in Porphyromonas gingivalis (strain ATCC 33277 / DSM 20709 / CIP 103683 / JCM 12257 / NCTC 11834 / 2561).